The following is a 918-amino-acid chain: Translation initiation factor IF-2 (918 aa).

The tract at residues 39-321 is disordered; that stretch reads DDASEKHLRN…KRDGRMKETT (283 aa). Over residues 95-146 the composition is skewed to low complexity; that stretch reads KSSNNESTTRNNNNNKNGNQNRNNTNGRPNNNQNRPNNNRNQNNNRNGNRPN. The span at 148-158 shows a compositional bias: basic and acidic residues; the sequence is PKRDEKQDRIR. Over residues 159 to 174 the composition is skewed to low complexity; it reads ASVAEAARMAAQANRE. Positions 180-190 are enriched in polar residues; sequence PQANRQRTNSA. 3 stretches are compositionally biased toward low complexity: residues 201-231, 237-267, and 278-296; these read NNQN…NNRN, SRPN…TANN, and GRNN…QNRP. The span at 302–313 shows a compositional bias: basic residues; the sequence is RKNKKRNRKAKR. Residues 419-588 form the tr-type G domain; sequence SRPPVVTIMG…LLQAEVLELK (170 aa). The tract at residues 428 to 435 is G1; the sequence is GHVDHGKT. 428–435 lines the GTP pocket; the sequence is GHVDHGKT. The G2 stretch occupies residues 453-457; it reads GITQG. Residues 474-477 are G3; that stretch reads DTPG. Residues 474-478 and 528-531 each bind GTP; these read DTPGH and NKID. The G4 stretch occupies residues 528 to 531; sequence NKID. The segment at 564-566 is G5; the sequence is SAK.

The protein belongs to the TRAFAC class translation factor GTPase superfamily. Classic translation factor GTPase family. IF-2 subfamily.

The protein localises to the cytoplasm. In terms of biological role, one of the essential components for the initiation of protein synthesis. Protects formylmethionyl-tRNA from spontaneous hydrolysis and promotes its binding to the 30S ribosomal subunits. Also involved in the hydrolysis of GTP during the formation of the 70S ribosomal complex. This Pediococcus pentosaceus (strain ATCC 25745 / CCUG 21536 / LMG 10740 / 183-1w) protein is Translation initiation factor IF-2.